Here is a 407-residue protein sequence, read N- to C-terminus: MQTQLTEEMRQNARALEADSILRACVHCGFCTATCPTYQLLGDELDGPRGRIYLIKQVLEGNEVTLKTQEHLDRCLTCRNCETTCPSGVRYHNLLDIGRDIVEQKVKRPLPERILREGLRQVVPRPAVFRALTQVGLVLRPFLPEQVRAKLPAETVKAKPRPPLRHKRRVLMLEGCAQPTLSPNTNAATARVLDRLGISVMPANEAGCCGAVDYHLNAQEKGLARARNNIDAWWPAIEAGAEAILQTASGCGAFVKEYGQMLKNDALYADKARQVSELAVDLVELLREEPLEKLAIRGDKKLAFHCPCTLQHAQKLNGEVEKVLLRLGFTLTDVPDSHLCCGSAGTYALTHPDLARQLRDNKMNALESGKPEMIVTANIGCQTHLASAGRTSVRHWIEIVEQALEKE.

4Fe-4S ferredoxin-type domains are found at residues 14–47 (RALE…ELDG) and 66–95 (LKTQ…HNLL). Residues Cys-25, Cys-28, Cys-31, Cys-35, Cys-75, Cys-78, Cys-81, and Cys-85 each contribute to the [4Fe-4S] cluster site.

In terms of assembly, the glycolate oxidase likely consists of three subunits, GlcD, GlcE and GlcF. [4Fe-4S] cluster is required as a cofactor.

It is found in the cell inner membrane. It carries out the reaction glycolate + A = glyoxylate + AH2. The enzyme catalyses (R)-lactate + A = pyruvate + AH2. In vitro the glycolate oxidase activity is inhibited by the sulfhydryl inhibitors CuSO4 and PCMB, by KCN, but not by the metal complexing agent EDTA. Functionally, component of a complex that catalyzes the oxidation of glycolate to glyoxylate. Is required for E.coli to grow on glycolate as a sole source of carbon. Is also able to oxidize D-lactate ((R)-lactate) with a similar rate. Does not link directly to O(2), and 2,6-dichloroindophenol (DCIP) and phenazine methosulfate (PMS) can act as artificial electron acceptors in vitro, but the physiological molecule that functions as a primary electron acceptor during glycolate oxidation is unknown. This Escherichia coli (strain K12) protein is Glycolate oxidase iron-sulfur subunit.